A 133-amino-acid chain; its full sequence is Large ribosomal subunit protein uL22 (133 aa).

It belongs to the universal ribosomal protein uL22 family. In terms of assembly, part of the 50S ribosomal subunit.

This protein binds specifically to 23S rRNA; its binding is stimulated by other ribosomal proteins, e.g. L4, L17, and L20. It is important during the early stages of 50S assembly. It makes multiple contacts with different domains of the 23S rRNA in the assembled 50S subunit and ribosome. Functionally, the globular domain of the protein is located near the polypeptide exit tunnel on the outside of the subunit, while an extended beta-hairpin is found that lines the wall of the exit tunnel in the center of the 70S ribosome. In Nocardia farcinica (strain IFM 10152), this protein is Large ribosomal subunit protein uL22.